The primary structure comprises 353 residues: Photosystem II protein D1 (353 aa).

Thr2 is modified (N-acetylthreonine). Thr2 carries the post-translational modification Phosphothreonine. 3 helical membrane-spanning segments follow: residues 29–46 (YIGWFGVLMIPTLLTATS), 118–133 (HFLLGVACYMGREWEL), and 142–156 (WIAVAYSAPVAAATA). Residue His118 coordinates chlorophyll a. Tyr126 is a binding site for pheophytin a. Residues Asp170 and Glu189 each coordinate [CaMn4O5] cluster. A helical transmembrane segment spans residues 197-218 (FHMLGVAGVFGGSLFSAMHGSL). His198 lines the chlorophyll a pocket. Residues His215 and 264-265 (SF) contribute to the a quinone site. His215 contacts Fe cation. Position 272 (His272) interacts with Fe cation. Residues 274-288 (FLAAWPVVGIWFTAL) traverse the membrane as a helical segment. Residues His332, Glu333, Asp342, and Ala344 each coordinate [CaMn4O5] cluster. Positions 345–353 (AVEAPSTNG) are excised as a propeptide.

This sequence belongs to the reaction center PufL/M/PsbA/D family. In terms of assembly, PSII is composed of 1 copy each of membrane proteins PsbA, PsbB, PsbC, PsbD, PsbE, PsbF, PsbH, PsbI, PsbJ, PsbK, PsbL, PsbM, PsbT, PsbX, PsbY, PsbZ, Psb30/Ycf12, at least 3 peripheral proteins of the oxygen-evolving complex and a large number of cofactors. It forms dimeric complexes. The cofactor is The D1/D2 heterodimer binds P680, chlorophylls that are the primary electron donor of PSII, and subsequent electron acceptors. It shares a non-heme iron and each subunit binds pheophytin, quinone, additional chlorophylls, carotenoids and lipids. D1 provides most of the ligands for the Mn4-Ca-O5 cluster of the oxygen-evolving complex (OEC). There is also a Cl(-1) ion associated with D1 and D2, which is required for oxygen evolution. The PSII complex binds additional chlorophylls, carotenoids and specific lipids.. Post-translationally, tyr-161 forms a radical intermediate that is referred to as redox-active TyrZ, YZ or Y-Z. C-terminally processed by CTPA; processing is essential to allow assembly of the oxygen-evolving complex and thus photosynthetic growth.

It localises to the plastid. Its subcellular location is the chloroplast thylakoid membrane. The enzyme catalyses 2 a plastoquinone + 4 hnu + 2 H2O = 2 a plastoquinol + O2. Photosystem II (PSII) is a light-driven water:plastoquinone oxidoreductase that uses light energy to abstract electrons from H(2)O, generating O(2) and a proton gradient subsequently used for ATP formation. It consists of a core antenna complex that captures photons, and an electron transfer chain that converts photonic excitation into a charge separation. The D1/D2 (PsbA/PsbD) reaction center heterodimer binds P680, the primary electron donor of PSII as well as several subsequent electron acceptors. This is Photosystem II protein D1 from Drimys granadensis.